We begin with the raw amino-acid sequence, 363 residues long: UDP-N-acetylglucosamine--N-acetylmuramyl-(pentapeptide) pyrophosphoryl-undecaprenol N-acetylglucosamine transferase (363 aa).

UDP-N-acetyl-alpha-D-glucosamine is bound by residues 7–9 (TGG), Asn-125, Ser-196, Ile-251, and Gln-296.

This sequence belongs to the glycosyltransferase 28 family. MurG subfamily.

It localises to the cell membrane. The catalysed reaction is Mur2Ac(oyl-L-Ala-gamma-D-Glu-L-Lys-D-Ala-D-Ala)-di-trans,octa-cis-undecaprenyl diphosphate + UDP-N-acetyl-alpha-D-glucosamine = beta-D-GlcNAc-(1-&gt;4)-Mur2Ac(oyl-L-Ala-gamma-D-Glu-L-Lys-D-Ala-D-Ala)-di-trans,octa-cis-undecaprenyl diphosphate + UDP + H(+). It functions in the pathway cell wall biogenesis; peptidoglycan biosynthesis. Cell wall formation. Catalyzes the transfer of a GlcNAc subunit on undecaprenyl-pyrophosphoryl-MurNAc-pentapeptide (lipid intermediate I) to form undecaprenyl-pyrophosphoryl-MurNAc-(pentapeptide)GlcNAc (lipid intermediate II). The sequence is that of UDP-N-acetylglucosamine--N-acetylmuramyl-(pentapeptide) pyrophosphoryl-undecaprenol N-acetylglucosamine transferase from Latilactobacillus sakei subsp. sakei (strain 23K) (Lactobacillus sakei subsp. sakei).